Here is a 274-residue protein sequence, read N- to C-terminus: NH(3)-dependent NAD(+) synthetase (274 aa).

46 to 53 contributes to the ATP binding site; the sequence is GISGGQDS. Residue aspartate 52 coordinates Mg(2+). Residue arginine 140 participates in deamido-NAD(+) binding. Residue threonine 160 coordinates ATP. Glutamate 165 is a Mg(2+) binding site. Deamido-NAD(+) contacts are provided by lysine 173 and aspartate 180. Positions 189 and 211 each coordinate ATP. A deamido-NAD(+)-binding site is contributed by 260 to 261; it reads HK.

Belongs to the NAD synthetase family. As to quaternary structure, homodimer.

It catalyses the reaction deamido-NAD(+) + NH4(+) + ATP = AMP + diphosphate + NAD(+) + H(+). It functions in the pathway cofactor biosynthesis; NAD(+) biosynthesis; NAD(+) from deamido-NAD(+) (ammonia route): step 1/1. In terms of biological role, catalyzes the ATP-dependent amidation of deamido-NAD to form NAD. Uses ammonia as a nitrogen source. The polypeptide is NH(3)-dependent NAD(+) synthetase (Streptococcus pyogenes serotype M1).